The primary structure comprises 264 residues: Proliferating cell nuclear antigen 2 (264 aa).

A DNA-binding region spans residues 61 to 80 (RCDRNLSMGMNLGNMSKMLK).

The protein belongs to the PCNA family. Homo- and heterotrimer. Interacts with POLH, ATXR5 and ATXR6.

It is found in the nucleus. Its function is as follows. This protein is an auxiliary protein of DNA polymerase delta and is involved in the control of eukaryotic DNA replication by increasing the polymerase's processibility during elongation of the leading strand. May be involved in UV resistance. The protein is Proliferating cell nuclear antigen 2 (PCNA2) of Arabidopsis thaliana (Mouse-ear cress).